A 747-amino-acid polypeptide reads, in one-letter code: Internal virion protein gp15 (747 aa).

It belongs to the T7virus internal virion protein gp15 family. In terms of assembly, homooctamer. Interacts with gp16; after ejection the gp15-gp16 complex composed of a gp15 octamer and a gp16 tetramer probably binds both the viral DNA and the host inner membrane. Interacts with gp14.

The protein resides in the virion. The protein localises to the host periplasm. Component of the cylindrical core that assembles on the inner surface of the capsid during capsid formation and plays a role in viral DNA ejection into the host cell. The inner core is composed of stacked rings of gp14, gp15 and gp16 proteins. Following binding to the host cell surface, the internal core is disassembled and gp15 is ejected along with gp14 and gp16 into the infected cell. Gp15 probably remains associated with gp16. The gp15-gp16 complex binds to both the viral DNA and the host inner membrane, probably escorting the leading end of the genome through the periplasm and controlling the extend of DNA translocated into the host cell. The protein is Internal virion protein gp15 of Escherichia phage T7 (Bacteriophage T7).